A 487-amino-acid chain; its full sequence is Solute carrier family 22 member 15-like (487 aa).

The helical transmembrane segment at 22–42 threads the bilayer; that stretch reads AFLTLLQVYVACQSMLIVLVG. Asn70 carries N-linked (GlcNAc...) asparagine glycosylation. Helical transmembrane passes span 90–110, 117–137, 141–161, 178–198, 203–223, 286–306, 315–335, 345–365, 374–394, 406–426, and 435–455; these read LASS…GPLS, PVYL…ALAP, VFAV…LVSF, SLTN…GFYI, TLAF…FLLP, ILLM…TLNA, LNVA…LYFI, ATAG…FLPE, TVLA…VYIY, AGLG…PFIP, and MPFV…LLLP.

It belongs to the major facilitator (TC 2.A.1) superfamily. Organic cation transporter (TC 2.A.1.19) family.

Its subcellular location is the membrane. Its function is as follows. Probably transports organic cations. The protein is Solute carrier family 22 member 15-like (slc22a15b) of Xenopus tropicalis (Western clawed frog).